The primary structure comprises 700 residues: Tectonic-2 (700 aa).

A signal peptide spans 1-25 (MGSLSPLSFLWGLLLLQGVLRPLRG). The Extracellular segment spans residues 26-665 (DPVFIPPFIR…YYQGEPRPQC (640 aa)). Asn76, Asn82, Asn146, Asn156, and Asn389 each carry an N-linked (GlcNAc...) asparagine glycan. The helical transmembrane segment at 666 to 682 (VAKGLMLLSLLMLAILL) threads the bilayer. Residues 683-700 (RHPWVGMCKAWSSASIQH) are Cytoplasmic-facing.

This sequence belongs to the tectonic family. Part of the tectonic-like complex (also named B9 complex).

It localises to the membrane. The protein localises to the cytoplasm. Its subcellular location is the cytoskeleton. The protein resides in the cilium basal body. In terms of biological role, component of the tectonic-like complex, a complex localized at the transition zone of primary cilia and acting as a barrier that prevents diffusion of transmembrane proteins between the cilia and plasma membranes. Required for hedgehog signaling transduction. In Rattus norvegicus (Rat), this protein is Tectonic-2 (Tctn2).